A 107-amino-acid polypeptide reads, in one-letter code: Ribonuclease P protein component 4 (107 aa).

Positions 66, 69, 92, and 95 each coordinate Zn(2+).

It belongs to the eukaryotic/archaeal RNase P protein component 4 family. In terms of assembly, consists of a catalytic RNA component and at least 4-5 protein subunits. Zn(2+) is required as a cofactor.

Its subcellular location is the cytoplasm. It carries out the reaction Endonucleolytic cleavage of RNA, removing 5'-extranucleotides from tRNA precursor.. In terms of biological role, part of ribonuclease P, a protein complex that generates mature tRNA molecules by cleaving their 5'-ends. The polypeptide is Ribonuclease P protein component 4 (Methanosarcina mazei (strain ATCC BAA-159 / DSM 3647 / Goe1 / Go1 / JCM 11833 / OCM 88) (Methanosarcina frisia)).